An 88-amino-acid chain; its full sequence is Putative membrane protein insertion efficiency factor (88 aa).

A disordered region spans residues 64-88; that stretch reads GVDPVPKKSSSKKTSSTTACGCGHS.

This sequence belongs to the UPF0161 family.

It is found in the cell inner membrane. In terms of biological role, could be involved in insertion of integral membrane proteins into the membrane. In Herminiimonas arsenicoxydans, this protein is Putative membrane protein insertion efficiency factor.